Consider the following 204-residue polypeptide: Ribosomal RNA small subunit methyltransferase G (204 aa).

S-adenosyl-L-methionine contacts are provided by glycine 73, phenylalanine 78, and arginine 139.

The protein belongs to the methyltransferase superfamily. RNA methyltransferase RsmG family.

Its subcellular location is the cytoplasm. The catalysed reaction is guanosine(527) in 16S rRNA + S-adenosyl-L-methionine = N(7)-methylguanosine(527) in 16S rRNA + S-adenosyl-L-homocysteine. Specifically methylates the N7 position of guanine in position 527 of 16S rRNA. This Coxiella burnetii (strain RSA 331 / Henzerling II) protein is Ribosomal RNA small subunit methyltransferase G.